Here is a 160-residue protein sequence, read N- to C-terminus: Large ribosomal subunit protein eL14 (160 aa).

Positions 136-160 (SDGTPRILKKDRRERLRAEKAKAKK) are disordered. Residues 146-160 (DRRERLRAEKAKAKK) are compositionally biased toward basic and acidic residues.

The protein belongs to the eukaryotic ribosomal protein eL14 family.

The protein is Large ribosomal subunit protein eL14 (RpL14) of Drosophila virilis (Fruit fly).